The sequence spans 356 residues: Homoserine O-acetyltransferase (356 aa).

The region spanning 50-335 (NVILVCHALT…DEPYGHDAFL (286 aa)) is the AB hydrolase-1 domain. Residue serine 146 is the Nucleophile of the active site. Arginine 215 contacts substrate. Catalysis depends on residues aspartate 302 and histidine 331. Residue aspartate 332 participates in substrate binding.

The protein belongs to the AB hydrolase superfamily. MetX family. As to quaternary structure, homodimer.

It is found in the cytoplasm. The catalysed reaction is L-homoserine + acetyl-CoA = O-acetyl-L-homoserine + CoA. The protein operates within amino-acid biosynthesis; L-methionine biosynthesis via de novo pathway; O-acetyl-L-homoserine from L-homoserine: step 1/1. In terms of biological role, transfers an acetyl group from acetyl-CoA to L-homoserine, forming acetyl-L-homoserine. This Chlorobaculum tepidum (strain ATCC 49652 / DSM 12025 / NBRC 103806 / TLS) (Chlorobium tepidum) protein is Homoserine O-acetyltransferase.